We begin with the raw amino-acid sequence, 304 residues long: Mitochondrial glycine transporter (304 aa).

Solcar repeat units lie at residues 25–114 (HPVI…LKQY), 121–205 (PTAL…TKNI), and 215–299 (LIPI…MMAK). The next 6 membrane-spanning stretches (helical) occupy residues 31–56 (FLCG…TRLQ), 89–115 (GMSP…KQYF), 127–152 (VMLG…TRYE), 180–203 (GLTA…NQTK), 219–245 (TNFS…KTHM), and 274–292 (GGIP…AWTV).

The protein belongs to the mitochondrial carrier (TC 2.A.29) family. SLC25A38 subfamily. Preferentially expressed in erythroid cells.

It localises to the mitochondrion inner membrane. It catalyses the reaction glycine(in) = glycine(out). Functionally, mitochondrial glycine transporter that imports glycine into the mitochondrial matrix. Plays an important role in providing glycine for the first enzymatic step in heme biosynthesis, the condensation of glycine with succinyl-CoA to produce 5-aminolevulinate (ALA) in the mitochondrial matrix. Required during erythropoiesis. Plays a role as pro-apoptotic protein that induces caspase-dependent apoptosis. This chain is Mitochondrial glycine transporter, found in Homo sapiens (Human).